An 84-amino-acid polypeptide reads, in one-letter code: Toxin Tst1 (84 aa).

A signal peptide spans 1–19 (MKGMILFISCLLLIDIVVG). Residues 21-82 (KEGYLMDHEG…VWDRATNKCG (62 aa)) enclose the LCN-type CS-alpha/beta domain. 4 disulfides stabilise this stretch: cysteine 31–cysteine 81, cysteine 35–cysteine 57, cysteine 43–cysteine 62, and cysteine 47–cysteine 64. Residue cysteine 81 is modified to Cysteine amide.

In terms of tissue distribution, expressed by the venom gland.

The protein localises to the secreted. In terms of biological role, beta toxins bind voltage-independently at site-4 of sodium channels (Nav) and shift the voltage of activation toward more negative potentials thereby affecting sodium channel activation and promoting spontaneous and repetitive firing. This toxin is active only on mammals. Is toxic to mice. The chain is Toxin Tst1 from Tityus stigmurus (Brazilian scorpion).